Consider the following 858-residue polypeptide: Ubiquitin carboxyl-terminal hydrolase 5 (858 aa).

N-acetylalanine is present on Ala-2. The segment at 74 to 96 (RRTRRPKEEDPTTGTGDPPRKKP) is disordered. Lys-113 participates in a covalent cross-link: Glycyl lysine isopeptide (Lys-Gly) (interchain with G-Cter in SUMO). Phosphoserine occurs at positions 149 and 156. The UBP-type; degenerate zinc-finger motif lies at 175–283 (QVSKHAFSLK…EHLSHFGIDM (109 aa)). Cysteines 195 and 816 form a disulfide. Positions 199 and 202 each coordinate Zn(2+). Substrate is bound at residue Trp-209. Residue Cys-219 participates in Zn(2+) binding. 221–224 (RRYF) is a binding site for substrate. His-232 is a binding site for Zn(2+). Residues Tyr-259, Tyr-261, and Asp-264 each coordinate substrate. A Phosphothreonine modification is found at Thr-292. Residues 326–856 (TGIRNLGNSC…LGYIYFYQRV (531 aa)) enclose the USP domain. Cys-335 functions as the Nucleophile in the catalytic mechanism. Position 623 is a phosphothreonine (Thr-623). UBA domains follow at residues 654–695 (MLDE…VMSH) and 722–762 (PPPE…IFSH). Phosphoserine occurs at positions 779, 783, and 785. His-818 serves as the catalytic Proton acceptor.

It belongs to the peptidase C19 family. In terms of assembly, homodimer. Interacts with TRIML1. Post-translationally, ubiquitinated by SMURF1; leading to proteasomal degradation. SUMOylated at Lys-113; SUMOylation affects the interaction with Cav3.2 channels.

It is found in the cytoplasm. The protein resides in the stress granule. The protein localises to the nucleus. It carries out the reaction Thiol-dependent hydrolysis of ester, thioester, amide, peptide and isopeptide bonds formed by the C-terminal Gly of ubiquitin (a 76-residue protein attached to proteins as an intracellular targeting signal).. Its function is as follows. Deubiquitinating enzyme that participates in a wide range of cellular processes by specifically cleaving isopeptide bonds between ubiquitin and substrate proteins or ubiquitin itself. Affects thereby important cellular signaling pathways such as NF-kappa-B, Wnt/beta-catenin, and cytokine production by regulating ubiquitin-dependent protein degradation. Participates in the activation of the Wnt signaling pathway by promoting FOXM1 deubiquitination and stabilization that induces the recruitment of beta-catenin to Wnt target gene promoter. Regulates the assembly and disassembly of heat-induced stress granules by mediating the hydrolysis of unanchored ubiquitin chains. Promotes lipopolysaccharide-induced apoptosis and inflammatory response by stabilizing the TXNIP protein. Affects T-cell biology by stabilizing the inhibitory receptor on T-cells PDC1. Acts as a negative regulator of autophagy by regulating ULK1 at both protein and mRNA levels. Acts also as a negative regulator of type I interferon production by simultaneously removing both 'Lys-48'-linked unanchored and 'Lys-63'-linked anchored polyubiquitin chains on the transcription factor IRF3. Modulates the stability of DNA mismatch repair protein MLH1 and counteracts the effect of the ubiquitin ligase UBR4. Upon activation by insulin, it gets phosphorylated through mTORC1-mediated phosphorylation to enhance YTHDF1 stability by removing 'Lys-11'-linked polyubiquitination. May also deubiquitinate other substrates such as the calcium channel CACNA1H. The chain is Ubiquitin carboxyl-terminal hydrolase 5 (UBP5) from Pongo abelii (Sumatran orangutan).